Consider the following 403-residue polypeptide: Cytochrome P450 monooxygenase ustC (403 aa).

The signal sequence occupies residues 1–18 (MSPFIFAVTLTFAILALG). Asparagine 52 and asparagine 92 each carry an N-linked (GlcNAc...) asparagine glycan. Cysteine 318 provides a ligand contact to heme.

It belongs to the cytochrome P450 family. Heme is required as a cofactor.

It functions in the pathway mycotoxin biosynthesis. Cytochrome P450 monooxygenase; part of the gene cluster that mediates the biosynthesis of the secondary metabolite ustiloxin B, an antimitotic tetrapeptide. First, ustA is processed by the subtilisin-like endoprotease Kex2 that is outside the ustiloxin B gene cluster, at the C-terminal side of Arg-Lys, after transfer to Golgi apparatus through the endoplasmic reticulum (ER). Cleavage by KEX2 generates 16 peptides YAIG-I to YAIG-XVI. To process the precursor peptide further, at least two peptidases are necessary to cleave the N-terminal and C-terminal sides of the Tyr-Ala-Ile-Gly core peptide which serves as backbone for the synthesis of ustiloxin B, through cyclization and modification of the tyrosine with a non-protein coding amino acid, norvaline. One of the two peptidases must be the serine peptidase ustP; and the other pepdidase is probably ustH. Macrocyclization of the core peptide derived from ustA requires the tyrosinase ustQ, as well as the homologous oxidases ustYa and ustYb, and leads to the production of the first cyclization product N-desmethylustiloxin F. For the formation of N-desmethylustiloxin F, three oxidation steps are required, hydroxylation at the benzylic position, hydroxylation at either the aromatic ring of Tyr or beta-position of Ile, and oxidative cyclization. UstQ may catalyze the oxidation of a phenol moiety, whereas the ustYa and ustYb are most likely responsible for the remaining two-step oxidations. N-desmethylustiloxin F is then methylated by ustM to yield ustiloxin F which in turn substrate of the cytochrome P450 monooxygenase ustC which catalyzes the formation of S-deoxyustiloxin H. The flavoprotein monooxygenases ustF1 and ustF2 then participate in the modification of the side chain of S-deoxyustiloxin H, leading to the synthesis of an oxime intermediate, via ustiloxin H. Finally, carboxylative dehydration performed by the cysteine desulfurase-like protein ustD yields ustiloxin B. The sequence is that of Cytochrome P450 monooxygenase ustC from Aspergillus flavus (strain ATCC 200026 / FGSC A1120 / IAM 13836 / NRRL 3357 / JCM 12722 / SRRC 167).